A 574-amino-acid polypeptide reads, in one-letter code: Sulfate adenylyltransferase (574 aa).

Residues 1 to 170 (MANAPHGGVL…VQAVSKPAYY (170 aa)) are N-terminal. Positions 171–395 (DYVALRYTPA…LRESYPPKAK (225 aa)) are catalytic. Gln198 lines the sulfate pocket. Residues 198-201 (QTRN) and 292-295 (GRDH) contribute to the ATP site. Catalysis depends on residues Thr199, Arg200, and Asn201. Arg200 serves as a coordination point for sulfate. Ala296 is a sulfate binding site. Met334 is a binding site for ATP. The tract at residues 396–574 (QGFTLFLTGL…ILLLEAQSLI (179 aa)) is allosteric regulation domain; adenylyl-sulfate kinase-like. 3'-phosphoadenylyl sulfate-binding positions include 435-438 (ETVR), Arg452, 478-479 (IA), and Lys519.

It in the N-terminal section; belongs to the sulfate adenylyltransferase family. The protein in the C-terminal section; belongs to the APS kinase family. Homohexamer. Dimer of trimers.

The protein localises to the cytoplasm. The enzyme catalyses sulfate + ATP + H(+) = adenosine 5'-phosphosulfate + diphosphate. The protein operates within sulfur metabolism; hydrogen sulfide biosynthesis; sulfite from sulfate: step 1/3. Allosterically inhibited by 3'-phosphoadenosine 5'-phosphosulfate (PAPS). Its function is as follows. Catalyzes the first intracellular reaction of sulfate assimilation, forming adenosine-5'-phosphosulfate (APS) from inorganic sulfate and ATP. Plays an important role in sulfate activation as a component of the biosynthesis pathway of sulfur-containing amino acids. The polypeptide is Sulfate adenylyltransferase (Mycosarcoma maydis (Corn smut fungus)).